We begin with the raw amino-acid sequence, 479 residues long: Glutamyl-tRNA(Gln) amidotransferase subunit A (479 aa).

Catalysis depends on charge relay system residues K75 and S150. The active-site Acyl-ester intermediate is the S174.

Belongs to the amidase family. GatA subfamily. Heterotrimer of A, B and C subunits.

The catalysed reaction is L-glutamyl-tRNA(Gln) + L-glutamine + ATP + H2O = L-glutaminyl-tRNA(Gln) + L-glutamate + ADP + phosphate + H(+). Allows the formation of correctly charged Gln-tRNA(Gln) through the transamidation of misacylated Glu-tRNA(Gln) in organisms which lack glutaminyl-tRNA synthetase. The reaction takes place in the presence of glutamine and ATP through an activated gamma-phospho-Glu-tRNA(Gln). The chain is Glutamyl-tRNA(Gln) amidotransferase subunit A from Synechococcus sp. (strain ATCC 27144 / PCC 6301 / SAUG 1402/1) (Anacystis nidulans).